Here is a 446-residue protein sequence, read N- to C-terminus: Transcriptional regulator STERILE APETALA (446 aa).

A compositionally biased stretch (low complexity) spans 1 to 10 (MSTSSSSSDN). The disordered stretch occupies residues 1–32 (MSTSSSSSDNGAGGSGGVFEAPSPSRPRRGAN).

As to expression, expressed in inflorescence and floral meristems, young floral organ primordia, and later in ovule primordia.

The protein resides in the nucleus. Its function is as follows. Transcriptional regulator involved in the specification of floral identity. Acts as A class cadastral protein by repressing the C class floral homeotic gene AGAMOUS in the external flower organs in association with APETALA2 and other repressors. Is required to maintain floral meristem identity in concert with AGAMOUS. Also interacts with APETALA2 to ensure the normal development of ovule. This Arabidopsis thaliana (Mouse-ear cress) protein is Transcriptional regulator STERILE APETALA (SAP).